The sequence spans 503 residues: Maturase K (503 aa).

Belongs to the intron maturase 2 family. MatK subfamily.

It is found in the plastid. The protein localises to the chloroplast. Usually encoded in the trnK tRNA gene intron. Probably assists in splicing its own and other chloroplast group II introns. This is Maturase K from Vicia faba (Broad bean).